The following is a 75-amino-acid chain: uncharacterized protein (75 aa).

Helical transmembrane passes span leucine 7–alanine 26 and methionine 36–valine 58.

The protein resides in the cell membrane. This is an uncharacterized protein from Bacillus subtilis (strain 168).